The chain runs to 524 residues: Peptide chain release factor 3 (524 aa).

Residues 9-275 (QRRRTFAIIS…AVVELSPPPL (267 aa)) enclose the tr-type G domain. Residues 18-25 (SHPDAGKT), 86-90 (DTPGH), and 140-143 (NKLD) each bind GTP.

Belongs to the TRAFAC class translation factor GTPase superfamily. Classic translation factor GTPase family. PrfC subfamily.

The protein resides in the cytoplasm. Its function is as follows. Increases the formation of ribosomal termination complexes and stimulates activities of RF-1 and RF-2. It binds guanine nucleotides and has strong preference for UGA stop codons. It may interact directly with the ribosome. The stimulation of RF-1 and RF-2 is significantly reduced by GTP and GDP, but not by GMP. This is Peptide chain release factor 3 from Methylobacillus flagellatus (strain ATCC 51484 / DSM 6875 / VKM B-1610 / KT).